Consider the following 181-residue polypeptide: Peptide deformylase 1 (181 aa).

Positions 106 and 148 each coordinate Fe cation. Glu149 is a catalytic residue. His152 is a Fe cation binding site.

The protein belongs to the polypeptide deformylase family. Fe(2+) is required as a cofactor.

It carries out the reaction N-terminal N-formyl-L-methionyl-[peptide] + H2O = N-terminal L-methionyl-[peptide] + formate. Its function is as follows. Removes the formyl group from the N-terminal Met of newly synthesized proteins. Requires at least a dipeptide for an efficient rate of reaction. N-terminal L-methionine is a prerequisite for activity but the enzyme has broad specificity at other positions. This is Peptide deformylase 1 from Burkholderia multivorans (strain ATCC 17616 / 249).